A 91-amino-acid chain; its full sequence is DNA-directed RNA polymerase subunit omega (91 aa).

Belongs to the RNA polymerase subunit omega family. In terms of assembly, the RNAP catalytic core consists of 2 alpha, 1 beta, 1 beta' and 1 omega subunit. When a sigma factor is associated with the core the holoenzyme is formed, which can initiate transcription.

It catalyses the reaction RNA(n) + a ribonucleoside 5'-triphosphate = RNA(n+1) + diphosphate. Functionally, promotes RNA polymerase assembly. Latches the N- and C-terminal regions of the beta' subunit thereby facilitating its interaction with the beta and alpha subunits. The protein is DNA-directed RNA polymerase subunit omega of Photorhabdus laumondii subsp. laumondii (strain DSM 15139 / CIP 105565 / TT01) (Photorhabdus luminescens subsp. laumondii).